Reading from the N-terminus, the 270-residue chain is Monocyte to macrophage differentiation factor 2 (270 aa).

The Cytoplasmic segment spans residues 1 to 38 (MFAPRLLDFQKTKYARFMNHRVPAHKRYQPTEYEHAAN). A helical membrane pass occupies residues 39-59 (CATHAFWIIPSILGSSNLYFL). At 60-65 (SDDDWE) the chain is on the lumenal side. A helical membrane pass occupies residues 66–86 (TISAWIYGLGLCGLFVVSTVF). Over 87–102 (HTISWKKSHLRMVEHC) the chain is Cytoplasmic. A helical transmembrane segment spans residues 103 to 123 (LHMFDRMVIYFFIAASYAPWL). Topologically, residues 124-132 (NLRELGPWA) are lumenal. The helical transmembrane segment at 133-153 (SHMRWLVWIMASVGTIYVFFF) threads the bilayer. Residues 154–182 (HERTGSCVQFLRGEACPKAGTACLPARYK) are Cytoplasmic-facing. A helical transmembrane segment spans residues 183–203 (LVELLCYVVMGFFPALVILSM). The Lumenal segment spans residues 204-205 (PN). A helical membrane pass occupies residues 206–226 (TEGIWELVTGGVFYCLGMVFF). Residues 227–233 (KSDGRIP) lie on the Cytoplasmic side of the membrane. The helical transmembrane segment at 234-254 (FAHAIWHLFVAFGAGTHYYAI) threads the bilayer. At 255-270 (WRYLYLPSTLQTKVSK) the chain is on the lumenal side.

It belongs to the ADIPOR family. In terms of tissue distribution, shows restricted expression with highest levels in brain and testis.

It is found in the golgi apparatus membrane. This Homo sapiens (Human) protein is Monocyte to macrophage differentiation factor 2.